The sequence spans 187 residues: Adenine phosphoribosyltransferase 1 (187 aa).

Serine 68 carries the post-translational modification Phosphoserine. 133-137 (ATGGS) is a binding site for AMP.

The protein belongs to the purine/pyrimidine phosphoribosyltransferase family. As to quaternary structure, homodimer. Mg(2+) is required as a cofactor.

The protein resides in the cytoplasm. The protein localises to the nucleus. It catalyses the reaction AMP + diphosphate = 5-phospho-alpha-D-ribose 1-diphosphate + adenine. It functions in the pathway purine metabolism; AMP biosynthesis via salvage pathway; AMP from adenine: step 1/1. Catalyzes a salvage reaction resulting in the formation of AMP, that is energically less costly than de novo synthesis. The sequence is that of Adenine phosphoribosyltransferase 1 from Saccharomyces cerevisiae (strain ATCC 204508 / S288c) (Baker's yeast).